Here is a 244-residue protein sequence, read N- to C-terminus: Probable transcriptional regulatory protein CBU_1566 (244 aa).

This sequence belongs to the TACO1 family.

It localises to the cytoplasm. This chain is Probable transcriptional regulatory protein CBU_1566, found in Coxiella burnetii (strain RSA 493 / Nine Mile phase I).